A 346-amino-acid polypeptide reads, in one-letter code: Phosphoribosylformylglycinamidine cyclo-ligase (346 aa).

It belongs to the AIR synthase family.

It localises to the cytoplasm. It carries out the reaction 2-formamido-N(1)-(5-O-phospho-beta-D-ribosyl)acetamidine + ATP = 5-amino-1-(5-phospho-beta-D-ribosyl)imidazole + ADP + phosphate + H(+). It functions in the pathway purine metabolism; IMP biosynthesis via de novo pathway; 5-amino-1-(5-phospho-D-ribosyl)imidazole from N(2)-formyl-N(1)-(5-phospho-D-ribosyl)glycinamide: step 2/2. The sequence is that of Phosphoribosylformylglycinamidine cyclo-ligase from Geobacillus thermodenitrificans (strain NG80-2).